The primary structure comprises 157 residues: Transcription elongation factor GreA (157 aa).

The stretch at 47–75 forms a coiled coil; that stretch reads SGEYEDAKKAQALLEGRIRELKHLLSRAE.

Belongs to the GreA/GreB family.

Necessary for efficient RNA polymerase transcription elongation past template-encoded arresting sites. The arresting sites in DNA have the property of trapping a certain fraction of elongating RNA polymerases that pass through, resulting in locked ternary complexes. Cleavage of the nascent transcript by cleavage factors such as GreA or GreB allows the resumption of elongation from the new 3'terminus. GreA releases sequences of 2 to 3 nucleotides. In Chloroflexus aggregans (strain MD-66 / DSM 9485), this protein is Transcription elongation factor GreA.